The chain runs to 2321 residues: MGPGARGRRRRRRPMSPPPPPPPVRALPLLLLLAGPGAAAPPCLDGSPCANGGRCTQLPSREAACLCPPGWVGERCQLEDPCHSGPCAGRGVCQSSVVAGTARFSCRCPRGFRGPDCSLPDPCLSSPCAHGARCSVGPDGRFLCSCPPGYQGRSCRSDVDECRVGEPCRHGGTCLNTPGSFRCQCPAGYTGPLCENPAVPCAPSPCRNGGTCRQSGDLTYDCACLPGFEGQNCEVNVDDCPGHRCLNGGTCVDGVNTYNCQCPPEWTGQFCTEDVDECQLQPNACHNGGTCFNTLGGHSCVCVNGWTGESCSQNIDDCATAVCFHGATCHDRVASFYCACPMGKTGLLCHLDDACVSNPCHEDAICDTNPVNGRAICTCPPGFTGGACDQDVDECSIGANPCEHLGRCVNTQGSFLCQCGRGYTGPRCETDVNECLSGPCRNQATCLDRIGQFTCICMAGFTGTYCEVDIDECQSSPCVNGGVCKDRVNGFSCTCPSGFSGSTCQLDVDECASTPCRNGAKCVDQPDGYECRCAEGFEGTLCDRNVDDCSPDPCHHGRCVDGIASFSCACAPGYTGTRCESQVDECRSQPCRHGGKCLDLVDKYLCRCPSGTTGVNCEVNIDDCASNPCTFGVCRDGINRYDCVCQPGFTGPLCNVEINECASSPCGEGGSCVDGENGFRCLCPPGSLPPLCLPPSHPCAHEPCSHGICYDAPGGFRCVCEPGWSGPRCSQSLARDACESQPCRAGGTCSSDGMGFHCTCPPGVQGRQCELLSPCTPNPCEHGGRCESAPGQLPVCSCPQGWQGPRCQQDVDECAGPAPCGPHGICTNLAGSFSCTCHGGYTGPSCDQDINDCDPNPCLNGGSCQDGVGSFSCSCLPGFAGPRCARDVDECLSNPCGPGTCTDHVASFTCTCPPGYGGFHCEQDLPDCSPSSCFNGGTCVDGVNSFSCLCRPGYTGAHCQHEADPCLSRPCLHGGVCSAAHPGFRCTCLESFTGPQCQTLVDWCSRQPCQNGGRCVQTGAYCLCPPGWSGRLCDIRSLPCREAAAQIGVRLEQLCQAGGQCVDEDSSHYCVCPEGRTGSHCEQEVDPCLAQPCQHGGTCRGYMGGYMCECLPGYNGDNCEDDVDECASQPCQHGGSCIDLVARYLCSCPPGTLGVLCEINEDDCGPGPPLDSGPRCLHNGTCVDLVGGFRCTCPPGYTGLRCEADINECRSGACHAAHTRDCLQDPGGGFRCLCHAGFSGPRCQTVLSPCESQPCQHGGQCRPSPGPGGGLTFTCHCAQPFWGPRCERVARSCRELQCPVGVPCQQTPRGPRCACPPGLSGPSCRSFPGSPPGASNASCAAAPCLHGGSCRPAPLAPFFRCACAQGWTGPRCEAPAAAPEVSEEPRCPRAACQAKRGDQRCDRECNSPGCGWDGGDCSLSVGDPWRQCEALQCWRLFNNSRCDPACSSPACLYDNFDCHAGGRERTCNPVYEKYCADHFADGRCDQGCNTEECGWDGLDCASEVPALLARGVLVLTVLLPPEELLRSSADFLQRLSAILRTSLRFRLDAHGQAMVFPYHRPSPGSEPRARRELAPEVIGSVVMLEIDNRLCLQSPENDHCFPDAQSAADYLGALSAVERLDFPYPLRDVRGEPLEPPEPSVPLLPLLVAGAVLLLVILVLGVMVARRKREHSTLWFPEGFSLHKDVASGHKGRREPVGQDALGMKNMAKGESLMGEVATDWMDTECPEAKRLKVEEPGMGAEEAVDCRQWTQHHLVAADIRVAPAMALTPPQGDADADGMDVNVRGPDGFTPLMLASFCGGALEPMPTEEDEADDTSASIISDLICQGAQLGARTDRTGETALHLAARYARADAAKRLLDAGADTNAQDHSGRTPLHTAVTADAQGVFQILIRNRSTDLDARMADGSTALILAARLAVEGMVEELIASHADVNAVDELGKSALHWAAAVNNVEATLALLKNGANKDMQDSKEETPLFLAAREGSYEAAKLLLDHFANREITDHLDRLPRDVAQERLHQDIVRLLDQPSGPRSPPGPHGLGPLLCPPGAFLPGLKAAQSGSKKSRRPPGKAGLGPQGPRGRGKKLTLACPGPLADSSVTLSPVDSLDSPRPFGGPPASPGGFPLEGPYAAATATAVSLAQLGGPGRAGLGRQPPGGCVLSLGLLNPVAVPLDWARLPPPAPPGPSFLLPLAPGPQLLNPGTPVSPQERPPPYLAVPGHGEEYPAAGAHSSPPKARFLRVPSEHPYLTPSPESPEHWASPSPPSLSDWSESTPSPATATGAMATTTGALPAQPLPLSVPSSLAQAQTQLGPQPEVTPKRQVLA.

Residues 1–14 (MGPGARGRRRRRRP) are compositionally biased toward basic residues. Residues 1–26 (MGPGARGRRRRRRPMSPPPPPPPVRA) are disordered. Residues 1 to 39 (MGPGARGRRRRRRPMSPPPPPPPVRALPLLLLLAGPGAA) form the signal peptide. The segment covering 15-25 (MSPPPPPPPVR) has biased composition (pro residues). EGF-like domains lie at 40–77 (APPC…ERCQ), 78–118 (LEDP…PDCS), and 119–156 (LPDP…RSCR). Residues 40 to 1643 (APPCLDGSPC…LEPPEPSVPL (1604 aa)) are Extracellular-facing. Cystine bridges form between C43/C55, C49/C65, C67/C76, C82/C93, C87/C106, C108/C117, C123/C134, C128/C144, C146/C155, C162/C174, C168/C183, C185/C194, C201/C212, C206/C222, C224/C233, C240/C251, C245/C260, C262/C271, C278/C291, C285/C300, C302/C311, C318/C329, C323/C338, C340/C349, C355/C366, C360/C377, C379/C388, C395/C408, C402/C417, C419/C428, C435/C446, C440/C455, C457/C466, C473/C484, C478/C493, C495/C504, C511/C522, C516/C531, C533/C542, C549/C559, C554/C568, C570/C579, C586/C597, C591/C606, C608/C617, C624/C634, C629/C643, C645/C654, C661/C672, C666/C681, C683/C692, C699/C709, C704/C718, C720/C729, C738/C749, C743/C758, C760/C769, C775/C786, C780/C796, C798/C807, C814/C826, C820/C835, C837/C846, C853/C864, C858/C873, C875/C884, C891/C901, C896/C910, C912/C921, C928/C939, C933/C948, C950/C959, C966/C977, C971/C986, C988/C997, C1004/C1015, C1009/C1022, C1024/C1033, C1040/C1061, C1055/C1070, C1072/C1081, C1088/C1099, C1093/C1108, C1110/C1119, C1126/C1137, C1131/C1146, C1148/C1157, C1164/C1182, C1176/C1191, C1193/C1202, C1209/C1222, C1214/C1232, C1234/C1243, C1250/C1261, C1255/C1275, C1277/C1286, C1293/C1304, C1298/C1313, and C1315/C1324. The EGF-like 4; calcium-binding domain maps to 158-195 (DVDECRVGEPCRHGGTCLNTPGSFRCQCPAGYTGPLCE). Residues 197–234 (PAVPCAPSPCRNGGTCRQSGDLTYDCACLPGFEGQNCE) enclose the EGF-like 5 domain. The region spanning 236-272 (NVDDCPGHRCLNGGTCVDGVNTYNCQCPPEWTGQFCT) is the EGF-like 6; calcium-binding domain. The EGF-like 7 domain maps to 274 to 312 (DVDECQLQPNACHNGGTCFNTLGGHSCVCVNGWTGESCS). The 37-residue stretch at 314-350 (NIDDCATAVCFHGATCHDRVASFYCACPMGKTGLLCH) folds into the EGF-like 8; calcium-binding domain. The EGF-like 9 domain occupies 351-389 (LDDACVSNPCHEDAICDTNPVNGRAICTCPPGFTGGACD). The EGF-like 10; calcium-binding domain occupies 391 to 429 (DVDECSIGANPCEHLGRCVNTQGSFLCQCGRGYTGPRCE). The EGF-like 11; calcium-binding domain maps to 431–467 (DVNECLSGPCRNQATCLDRIGQFTCICMAGFTGTYCE). The EGF-like 12; calcium-binding domain occupies 469 to 505 (DIDECQSSPCVNGGVCKDRVNGFSCTCPSGFSGSTCQ). In terms of domain architecture, EGF-like 13; calcium-binding spans 507-543 (DVDECASTPCRNGAKCVDQPDGYECRCAEGFEGTLCD). The EGF-like 14; calcium-binding domain occupies 545–580 (NVDDCSPDPCHHGRCVDGIASFSCACAPGYTGTRCE). One can recognise an EGF-like 15; calcium-binding domain in the interval 582 to 618 (QVDECRSQPCRHGGKCLDLVDKYLCRCPSGTTGVNCE). The EGF-like 16; calcium-binding domain occupies 620-655 (NIDDCASNPCTFGVCRDGINRYDCVCQPGFTGPLCN). In terms of domain architecture, EGF-like 17; calcium-binding spans 657-693 (EINECASSPCGEGGSCVDGENGFRCLCPPGSLPPLCL). EGF-like domains are found at residues 695–730 (PSHP…PRCS), 734–770 (ARDA…RQCE), and 771–808 (LLSP…PRCQ). One can recognise an EGF-like 21; calcium-binding domain in the interval 810–847 (DVDECAGPAPCGPHGICTNLAGSFSCTCHGGYTGPSCD). In terms of domain architecture, EGF-like 22; calcium-binding spans 849-885 (DINDCDPNPCLNGGSCQDGVGSFSCSCLPGFAGPRCA). The EGF-like 23; calcium-binding domain maps to 887 to 922 (DVDECLSNPCGPGTCTDHVASFTCTCPPGYGGFHCE). 5 EGF-like domains span residues 924-960 (DLPD…AHCQ), 962-998 (EADP…PQCQ), 1000-1034 (LVDW…RLCD), 1036-1082 (RSLP…SHCE), and 1084-1120 (EVDP…DNCE). One can recognise an EGF-like 29; calcium-binding domain in the interval 1122 to 1158 (DVDECASQPCQHGGSCIDLVARYLCSCPPGTLGVLCE). One can recognise an EGF-like 30; calcium-binding domain in the interval 1160–1203 (NEDDCGPGPPLDSGPRCLHNGTCVDLVGGFRCTCPPGYTGLRCE). The N-linked (GlcNAc...) asparagine glycan is linked to N1179. 4 consecutive EGF-like domains span residues 1205 to 1244 (DINE…PRCQ), 1246 to 1287 (VLSP…PRCE), 1289 to 1325 (VARS…PSCR), and 1335 to 1373 (SNAS…PRCE). The N-linked (GlcNAc...) asparagine glycan is linked to N1336. 12 disulfides stabilise this stretch: C1339/C1350, C1344/C1361, C1363/C1372, C1387/C1410, C1392/C1405, C1401/C1417, C1428/C1451, C1433/C1446, C1442/C1458, C1467/C1493, C1475/C1488, and C1484/C1500. 3 LNR repeats span residues 1387-1427 (CPRA…PWRQ), 1428-1458 (CEAL…NFDC), and 1467-1505 (CNPV…SEVP). An N-linked (GlcNAc...) asparagine glycan is attached at N1438. Residues 1644 to 1664 (LPLLVAGAVLLLVILVLGVMV) form a helical membrane-spanning segment. The Cytoplasmic portion of the chain corresponds to 1665 to 2321 (ARRKREHSTL…EVTPKRQVLA (657 aa)). ANK repeat units follow at residues 1838-1867 (TGET…DTNA), 1871-1901 (SGRT…DLDA), 1905-1934 (DGST…DVNA), 1938-1967 (LGKS…NKDM), and 1971-2000 (KEET…NREI). Positions 2024–2120 (LDQPSGPRSP…FGGPPASPGG (97 aa)) are disordered. Residues 2039 to 2053 (LGPLLCPPGAFLPGL) show a composition bias toward low complexity. Residue R2174 is modified to Omega-N-methylarginine. Residues 2190–2321 (APGPQLLNPG…EVTPKRQVLA (132 aa)) are disordered. A compositionally biased stretch (low complexity) spans 2269-2289 (STPSPATATGAMATTTGALPA). Residues 2296–2308 (VPSSLAQAQTQLG) show a composition bias toward polar residues.

The protein belongs to the NOTCH family. As to quaternary structure, heterodimer of a C-terminal fragment N(TM) and a N-terminal fragment N(EC) which are probably linked by disulfide bonds. Interacts with MAML1, MAML2 and MAML3 which act as transcriptional coactivators for NOTCH3. Interacts with PSMA1. Interacts with HIF1AN. Synthesized in the endoplasmic reticulum as an inactive form which is proteolytically cleaved by a furin-like convertase in the trans-Golgi network before it reaches the plasma membrane to yield an active, ligand-accessible form. Cleavage results in a C-terminal fragment N(TM) and a N-terminal fragment N(EC). Following ligand binding, it is cleaved by TNF-alpha converting enzyme (TACE) to yield a membrane-associated intermediate fragment called notch extracellular truncation (NEXT). This fragment is then cleaved by presenilin dependent gamma-secretase to release a notch-derived peptide containing the intracellular domain (NICD) from the membrane. In terms of processing, phosphorylated. Post-translationally, hydroxylated by HIF1AN. In terms of tissue distribution, ubiquitously expressed in fetal and adult tissues.

The protein localises to the cell membrane. Its subcellular location is the nucleus. Its function is as follows. Functions as a receptor for membrane-bound ligands Jagged1, Jagged2 and Delta1 to regulate cell-fate determination. Upon ligand activation through the released notch intracellular domain (NICD) it forms a transcriptional activator complex with RBPJ/RBPSUH and activates genes of the enhancer of split locus. Affects the implementation of differentiation, proliferation and apoptotic programs. This chain is Neurogenic locus notch homolog protein 3 (NOTCH3), found in Homo sapiens (Human).